We begin with the raw amino-acid sequence, 1083 residues long: FACT complex subunit spt16 (1083 aa).

Phosphoserine is present on S437. Positions 466-504 (LESKLRNEINTEEKRKEHQRELAQQLNERAKDRLARQGN) form a coiled coil. The interval 923-1083 (FEQGGWTFLD…NGHKSKKSRH (161 aa)) is disordered. The span at 935-987 (SGSEGENETAESEEDEAYNPTDAESDEESDEDSEYSEASEDSEESDEDLGSDE) shows a compositional bias: acidic residues. Basic and acidic residues predominate over residues 988–1023 (ESGKDWSDLEREAAEEDRNHDYAADDKPRNGKFDSK). Residues 1024–1033 (KHGKSSKHSP) show a composition bias toward basic residues. Residues 1058–1076 (SSKDKDRKRSRDDSRDNGH) show a composition bias toward basic and acidic residues.

This sequence belongs to the peptidase M24 family. SPT16 subfamily. Component of the FACT complex, a stable heterodimer of dre4/spt16 and Ssrp. Interacts with TRL/GAGA.

The protein localises to the nucleus. Its subcellular location is the chromosome. Its function is as follows. Component of the FACT complex, a general chromatin factor that acts to reorganize nucleosomes. The FACT complex is involved in multiple processes that require DNA as a template such as mRNA elongation, DNA replication and DNA repair. During transcription elongation the FACT complex acts as a histone chaperone that both destabilizes and restores nucleosomal structure. It facilitates the passage of RNA polymerase II and transcription by promoting the dissociation of one histone H2A-H2B dimer from the nucleosome, then subsequently promotes the reestablishment of the nucleosome following the passage of RNA polymerase II. The FACT complex is required for expression of Hox genes. The protein is FACT complex subunit spt16 (dre4) of Drosophila melanogaster (Fruit fly).